The chain runs to 205 residues: MEVNVINIESQNIGKIDLNPLIFSVNYRPDILKMVVEWQLSKRRVGAHKTKTIGDVSGTTAKPYRQKHTGRARQGSLRSPQFRGGAVIFGPVVRSHAYSLNKKVRNLGLKVALSLKNSCNKLLILDSIDVNFVKTAQVLRFIKNFEHQSFLIIGKDYNKGMMYSCKNLHNVTLLKQIGTNVFDILRHDCVILTVDTVKYLEDRLL.

Residues 56 to 78 (VSGTTAKPYRQKHTGRARQGSLR) are disordered.

It belongs to the universal ribosomal protein uL4 family. As to quaternary structure, part of the 50S ribosomal subunit.

Its function is as follows. One of the primary rRNA binding proteins, this protein initially binds near the 5'-end of the 23S rRNA. It is important during the early stages of 50S assembly. It makes multiple contacts with different domains of the 23S rRNA in the assembled 50S subunit and ribosome. Functionally, forms part of the polypeptide exit tunnel. The protein is Large ribosomal subunit protein uL4 of Ehrlichia ruminantium (strain Gardel).